We begin with the raw amino-acid sequence, 45 residues long: uncharacterized protein (45 aa).

The C2H2-type zinc finger occupies 2–25 (YQCLRCGGIFNKRREVVEHLLVGH).

This is an uncharacterized protein from Sulfolobus spindle-shape virus 1 (SSV1).